The chain runs to 860 residues: Transforming growth factor-beta receptor-associated protein 1 (860 aa).

One can recognise a CNH domain in the interval Arg24–Val297. The stretch at Arg564–Pro728 is one CHCR repeat.

This sequence belongs to the TRAP1 family. In terms of assembly, interacts with TGFBR2 and ACVR2B; in the absence of ligand stimulation. Interacts with TGFBR1, ACVRL1, BMPR1A and ACVR1B; in the absence of ligand stimulation and to a less extent. Interacts with SMAD4; the interaction seems to be mutually exclusive with the interaction of SMAD4 and phosphorylated SMAD2. May interact with ALOX5. Interacts with RAB5C. Interacts with VPS8, VPS11 and VPS16. Component of the putative class C core vacuole/endosome tethering (CORVET) complex; the core of which composed of the class C Vps proteins VPS11, VPS16, VPS18 and VPS33A, is associated with VPS8 and TGFBRAP1.

Its subcellular location is the cytoplasm. The protein localises to the early endosome. Functionally, plays a role in the TGF-beta/activin signaling pathway. It associates with inactive heteromeric TGF-beta and activin receptor complexes, mainly through the type II receptor, and is released upon activation of signaling. May recruit SMAD4 to the vicinity of the receptor complex and facilitate its interaction with receptor-regulated Smads, such as SMAD2. In terms of biological role, plays a role in vesicle-mediated protein trafficking of the endocytic membrane transport pathway. Believed to act as a component of the putative CORVET endosomal tethering complexes which is proposed to be involved in the Rab5-to-Rab7 endosome conversion probably implicating MON1A/B, and via binding SNAREs and SNARE complexes to mediate tethering and docking events during SNARE-mediated membrane fusion. The CORVET complex is proposed to function as a Rab5 effector to mediate early endosome fusion probably in specific endosome subpopulations. Functions predominantly in APPL1-containing endosomes and in degradative but not recycling trafficking of endocytosed cargo. In Homo sapiens (Human), this protein is Transforming growth factor-beta receptor-associated protein 1 (TGFBRAP1).